Reading from the N-terminus, the 274-residue chain is Probable starch degradation products transport system permease protein AmyC (274 aa).

6 consecutive transmembrane segments (helical) span residues 11–31 (LTFLGIVLSLLWISPFYIILV), 73–93 (LIITVFSILIIAIFSSMTAYA), 103–123 (VIIYMIFTVAMLIPFQSVMIP), 139–159 (LVFMYLGFGSSLGVFLYYGAL), 184–204 (IILPLLNPTTITLAVLDIMWI), and 238–258 (WNLGMAGLTIAILPVVIFYFL). An ABC transmembrane type-1 domain is found at 69–259 (FSNTLIITVF…LPVVIFYFLA (191 aa)).

The protein belongs to the binding-protein-dependent transport system permease family. MalFG subfamily.

The protein localises to the cell membrane. Its function is as follows. Probably part of a binding-protein-dependent transport system starch degradation products. Probably responsible for the translocation of the substrate across the membrane. This chain is Probable starch degradation products transport system permease protein AmyC (amyC), found in Thermoanaerobacterium thermosulfurigenes (Clostridium thermosulfurogenes).